Consider the following 153-residue polypeptide: 6,7-dimethyl-8-ribityllumazine synthase (153 aa).

5-amino-6-(D-ribitylamino)uracil-binding positions include Phe-21, 55-57 (AFE), and 79-81 (TVI). Position 84–85 (84–85 (AT)) interacts with (2S)-2-hydroxy-3-oxobutyl phosphate. His-87 functions as the Proton donor in the catalytic mechanism. Phe-112 contacts 5-amino-6-(D-ribitylamino)uracil. Arg-126 serves as a coordination point for (2S)-2-hydroxy-3-oxobutyl phosphate.

Belongs to the DMRL synthase family. Forms an icosahedral capsid composed of 60 subunits, arranged as a dodecamer of pentamers.

It carries out the reaction (2S)-2-hydroxy-3-oxobutyl phosphate + 5-amino-6-(D-ribitylamino)uracil = 6,7-dimethyl-8-(1-D-ribityl)lumazine + phosphate + 2 H2O + H(+). The protein operates within cofactor biosynthesis; riboflavin biosynthesis; riboflavin from 2-hydroxy-3-oxobutyl phosphate and 5-amino-6-(D-ribitylamino)uracil: step 1/2. In terms of biological role, catalyzes the formation of 6,7-dimethyl-8-ribityllumazine by condensation of 5-amino-6-(D-ribitylamino)uracil with 3,4-dihydroxy-2-butanone 4-phosphate. This is the penultimate step in the biosynthesis of riboflavin. The protein is 6,7-dimethyl-8-ribityllumazine synthase of Bacillus cereus (strain G9842).